The sequence spans 327 residues: Tumor necrosis factor receptor superfamily member 6 (327 aa).

The first 21 residues, 1–21, serve as a signal peptide directing secretion; the sequence is MLWIWAVLPLVLAGSQLRVHT. The Extracellular segment spans residues 22–169; it reads QGTNSISESL…NCRKQSPRNR (148 aa). N-linked (GlcNAc...) asparagine glycosylation is present at asparagine 43. TNFR-Cys repeat units follow at residues 43-79, 80-123, and 124-162; these read NCSE…PTCA, PCTE…NTKC, and KCKP…TNCR. 9 cysteine pairs are disulfide-bonded: cysteine 44–cysteine 55, cysteine 56–cysteine 69, cysteine 59–cysteine 78, cysteine 81–cysteine 97, cysteine 100–cysteine 115, cysteine 103–cysteine 123, cysteine 125–cysteine 139, cysteine 142–cysteine 153, and cysteine 145–cysteine 161. Asparagine 114 is a glycosylation site (N-linked (GlcNAc...) asparagine). The chain crosses the membrane as a helical span at residues 170–186; it reads LWLLTILVLLIPLVFIY. Residues 187–327 are Cytoplasmic-facing; that stretch reads RKYRKRKCWK…GNENEGQCLE (141 aa). Residue cysteine 194 is the site of S-palmitoyl cysteine attachment. The segment at 204 to 309 is interaction with HIPK3; it reads SRTSSRETIP…DKFQDMVQKD (106 aa). At threonine 206 the chain carries Phosphothreonine. A phosphoserine mark is found at serine 217 and serine 220. An interaction with CALM region spans residues 222 to 246; the sequence is SKYIPRIAEDMTIQEAKKFARENNI. The Death domain maps to 222-306; sequence SKYIPRIAED…RTLDKFQDMV (85 aa). The disordered stretch occupies residues 308–327; sequence KDLGKSTPDTGNENEGQCLE. Threonine 314 carries the phosphothreonine modification. Residues 314–327 are compositionally biased toward polar residues; that stretch reads TPDTGNENEGQCLE.

In terms of assembly, component of the death-induced signaling complex (DISC) composed of cell surface receptor FAS/CD95, adapter protein FADD and the CASP8 protease; recruitment of CASP8 to the complex is required for processing of CASP8 into the p18 and p10 subunits. Interacts directly (via DED domain) with NOL3 (via CARD domain); inhibits death-inducing signaling complex (DISC) assembly by inhibiting the increase in FAS-FADD binding induced by FAS activation. Binds DAXX. Interacts with HIPK3. Part of a complex containing HIPK3 and FADD. Binds RIPK1 and FAIM2. Interacts with BABAM2 and FEM1B. Interacts with CALM. In the absence of stimulation, interacts with BIRC2, DDX3X and GSK3B. The interaction with BIRC2 and DDX3X is further enhanced upon receptor stimulation and accompanied by DDX3X and BIRC2 cleavage. Palmitoylated. Palmitoylation by ZDHHC7 prevents the lysosomal degradation of FAS regulating its expression at the plasma membrane. As to expression, detected in various tissues including thymus, liver, lung, heart, and adult ovary.

The protein resides in the cell membrane. The protein localises to the membrane raft. Receptor for TNFSF6/FASLG. The adapter molecule FADD recruits caspase CASP8 to the activated receptor. The resulting death-inducing signaling complex (DISC) performs CASP8 proteolytic activation which initiates the subsequent cascade of caspases (aspartate-specific cysteine proteases) mediating apoptosis. FAS-mediated apoptosis may have a role in the induction of peripheral tolerance, in the antigen-stimulated suicide of mature T-cells, or both. In Mus musculus (Mouse), this protein is Tumor necrosis factor receptor superfamily member 6 (Fas).